The sequence spans 225 residues: 2-amino-5-formylamino-6-ribosylaminopyrimidin-4(3H)-one 5'-monophosphate deformylase (225 aa).

Residues E28, H30, D39, and H107 each coordinate Fe cation.

It belongs to the creatininase superfamily. FAPy deformylase family. As to quaternary structure, homodimer. The cofactor is Fe(2+). Requires Zn(2+) as cofactor.

The catalysed reaction is 2-amino-5-formylamino-6-(5-phospho-D-ribosylamino)pyrimidin-4(3H)-one + H2O = 2,5-diamino-6-(1-D-ribosylamino)pyrimidin-4(3H)-one 5'-phosphate + formate + H(+). Its pathway is cofactor biosynthesis; coenzyme F420 biosynthesis. The protein operates within cofactor biosynthesis; riboflavin biosynthesis. Its function is as follows. Catalyzes the hydrolysis of the formamide of 2-amino-5-formylamino-6-ribosylamino-4(3H)-pyrimidinone 5'-monophosphate (FAPy) to form 2,5-diamino-6-ribosylamino-4(3H)-pyrimidinone 5'-phosphate (APy). This chain is 2-amino-5-formylamino-6-ribosylaminopyrimidin-4(3H)-one 5'-monophosphate deformylase, found in Methanocaldococcus sp. (strain FS406-22).